A 259-amino-acid chain; its full sequence is Global transcriptional regulator CodY (259 aa).

Positions 1–155 are GAF domain; the sequence is MNLLAKTRKL…GATVVGMEIL (155 aa). Residues 203–222 constitute a DNA-binding region (H-T-H motif); it reads ASKIADRVGITRSVIVNALR.

This sequence belongs to the CodY family.

It localises to the cytoplasm. Functionally, DNA-binding global transcriptional regulator which is involved in the adaptive response to starvation and acts by directly or indirectly controlling the expression of numerous genes in response to nutrient availability. During rapid exponential growth, CodY is highly active and represses genes whose products allow adaptation to nutrient depletion. The chain is Global transcriptional regulator CodY from Exiguobacterium sibiricum (strain DSM 17290 / CCUG 55495 / CIP 109462 / JCM 13490 / 255-15).